The sequence spans 142 residues: Hemoglobin subunit alpha (142 aa).

The Globin domain occupies Val-2–Arg-142. Residue Ser-4 is modified to Phosphoserine. Lys-8 carries the N6-succinyllysine modification. At Thr-9 the chain carries Phosphothreonine. Lys-12 bears the N6-succinyllysine mark. Residue Lys-17 is modified to N6-acetyllysine; alternate. Lys-17 is subject to N6-succinyllysine; alternate. Residue Tyr-25 is modified to Phosphotyrosine. Ser-36 is subject to Phosphoserine. An N6-succinyllysine modification is found at Lys-41. Phosphoserine is present on Ser-50. Residue His-59 participates in O2 binding. Heme b is bound at residue His-88. Ser-103 carries the post-translational modification Phosphoserine. A Phosphothreonine modification is found at Thr-109. A phosphoserine mark is found at Ser-125 and Ser-132. 2 positions are modified to phosphothreonine: Thr-135 and Thr-138. Ser-139 is subject to Phosphoserine.

The protein belongs to the globin family. In terms of assembly, heterotetramer of two alpha chains and two beta chains. In terms of tissue distribution, red blood cells.

Involved in oxygen transport from the lung to the various peripheral tissues. Its function is as follows. Hemopressin acts as an antagonist peptide of the cannabinoid receptor CNR1. Hemopressin-binding efficiently blocks cannabinoid receptor CNR1 and subsequent signaling. The polypeptide is Hemoglobin subunit alpha (HBA) (Dasyurus viverrinus (Eastern quoll)).